A 271-amino-acid chain; its full sequence is MAVITGASSGIGLECVLMLLNQGYKVYALSRHATLCVALNHALCECVDIDVSDSNALKEVFLNISAKEDHCDVLINSAGYGVFGSVEDTPIEEVKKQFSVNFFALCEVVQLCLPLLKNKPYSKIFNLSSIAGRVSMLFLGHYSASKHALEAYSDALRLELKPFNVQVCLIEPGPVKSNWEKTAFENDERKDSVYALEVNAAKSFYSGVYQKALNAKEVAQKIVFLSMSHKIKARYLIGLKTQLLLALYQILPSSWYDSLFRLVVLGRKRDA.

An NAD(+)-binding site is contributed by Met1–Lys25. Ser129 contributes to the substrate binding site. Catalysis depends on Tyr142, which acts as the Proton acceptor.

Belongs to the short-chain dehydrogenases/reductases (SDR) family.

The chain is Probable short-chain type dehydrogenase/reductase VdlC (vdlC) from Helicobacter pylori (strain J99 / ATCC 700824) (Campylobacter pylori J99).